Here is a 176-residue protein sequence, read N- to C-terminus: Translation initiation factor IF-3 (176 aa).

Belongs to the IF-3 family. Monomer.

It is found in the cytoplasm. Functionally, IF-3 binds to the 30S ribosomal subunit and shifts the equilibrium between 70S ribosomes and their 50S and 30S subunits in favor of the free subunits, thus enhancing the availability of 30S subunits on which protein synthesis initiation begins. The protein is Translation initiation factor IF-3 of Streptococcus pyogenes serotype M18 (strain MGAS8232).